The chain runs to 519 residues: Major facilitator superfamily domain-containing protein 8 (519 aa).

The tract at residues 1–25 is disordered; it reads MANLGSEAEREPLLGPGSPGSREWS. Residues 1-41 are Cytoplasmic-facing; sequence MANLGSEAEREPLLGPGSPGSREWSEIETQEHYKSRWKSVR. Positions 13–14 match the Dileucine internalization motif motif; that stretch reads LL. The helical transmembrane segment at 42–62 threads the bilayer; it reads ILYLTMFLSSVGFSIVIMSIW. Residues 63–75 are Extracellular-facing; the sequence is PYLQKIDQTADAS. The chain crosses the membrane as a helical span at residues 76–96; sequence FLGWVIASYSLGQMVASPLFG. The Cytoplasmic portion of the chain corresponds to 97 to 106; that stretch reads LWSNYRPRKE. A helical membrane pass occupies residues 107-127; that stretch reads PLIVSISISVAANCLYAYVHV. The Extracellular portion of the chain corresponds to 128–140; the sequence is PAAHNKYYMLIAR. Residues 141–161 traverse the membrane as a helical segment; that stretch reads GLVGFGAGNVAVVRSYIAGAT. Residues 162-174 lie on the Cytoplasmic side of the membrane; the sequence is SLQERTNAMANTS. Residues 175–195 form a helical membrane-spanning segment; that stretch reads TCQALGFILGPVFQTCFALIG. Topologically, residues 196 to 212 are extracellular; sequence EKGVTWDIIKLQVNMYT. The chain crosses the membrane as a helical span at residues 213–233; the sequence is APVLLAAFLGILNIILILFIL. The Cytoplasmic portion of the chain corresponds to 234-267; it reads REHRVDDLGRQCKSVNFQEENTDEPQIPEGSIDQ. Residues 268–288 form a helical membrane-spanning segment; that stretch reads VAVVATNIVFFVVLFIFAVYE. The Extracellular portion of the chain corresponds to 289–310; the sequence is TILTPLTLDMYAWTQEQAVLYD. A helical membrane pass occupies residues 311–331; the sequence is GILLVAFGVEAVLVFMGVKLL. Over 332–338 the chain is Cytoplasmic; that stretch reads SKKIGER. The chain crosses the membrane as a helical span at residues 339-359; that stretch reads AILLGGFVVVWVGFFILLPWG. Topologically, residues 360–416 are extracellular; it reads NQFPKIQWEDLHNSSTPNTTFGEIIIGLWNSSREDHSEQPTGCPIEQTWCLYTPVIH. N-linked (GlcNAc...) asparagine glycosylation is found at N372 and N377. The chain crosses the membrane as a helical span at residues 417–439; sequence LAQFLTAAVLIGTGYPACSVMSY. The Cytoplasmic portion of the chain corresponds to 440–452; sequence TLYSKVLGPKPQG. The chain crosses the membrane as a helical span at residues 453–473; the sequence is IYMGWLTTSGSAARILGPVFI. Residues 474-483 lie on the Extracellular side of the membrane; the sequence is SHVYTYLGPR. Residues 484–504 traverse the membrane as a helical segment; that stretch reads WAFSLVCGIVVLTILLIGAVY. Topologically, residues 505–519 are cytoplasmic; that stretch reads KRLVAFSVRYMRIQE.

It belongs to the major facilitator superfamily.

It localises to the endosome membrane. It is found in the lysosome membrane. The catalysed reaction is chloride(in) = chloride(out). It catalyses the reaction iodide(out) = iodide(in). The enzyme catalyses fluoride(in) = fluoride(out). Its function is as follows. Outward-rectifying chloride channel involved in endolysosomal chloride homeostasis, membrane fusion and function. Conducts chloride currents up to hundreds of picoamperes. Regulates lysosomal calcium content by reducing the lysosomal membrane potential, thereby activating TRPML1 channel and further release of lysosomal calcium ions. Regulates the pH in endolysosomal compartments and may contribute to progressive acidification from endosome to lysosome. Permeable to other halides such as iodide and fluoride ions. The chain is Major facilitator superfamily domain-containing protein 8 from Mus musculus (Mouse).